Consider the following 152-residue polypeptide: Siroheme decarboxylase NirD subunit (152 aa).

This sequence belongs to the Ahb/Nir family. In terms of assembly, probably forms a complex composed of NirD, NirL, NirG and NirH. All proteins are required for the total conversion of siroheme to didecarboxysiroheme.

The enzyme catalyses siroheme + 2 H(+) = 12,18-didecarboxysiroheme + 2 CO2. The protein operates within porphyrin-containing compound metabolism. Functionally, involved in heme d1 biosynthesis. Catalyzes the decarboxylation of siroheme into didecarboxysiroheme. This chain is Siroheme decarboxylase NirD subunit, found in Stutzerimonas stutzeri (Pseudomonas stutzeri).